We begin with the raw amino-acid sequence, 316 residues long: ATP synthase gamma chain (316 aa).

This sequence belongs to the ATPase gamma chain family. F-type ATPases have 2 components, CF(1) - the catalytic core - and CF(0) - the membrane proton channel. CF(1) has five subunits: alpha(3), beta(3), gamma(1), delta(1), epsilon(1). CF(0) has three main subunits: a, b and c.

It is found in the cellular thylakoid membrane. In terms of biological role, produces ATP from ADP in the presence of a proton gradient across the membrane. The gamma chain is believed to be important in regulating ATPase activity and the flow of protons through the CF(0) complex. The chain is ATP synthase gamma chain from Parasynechococcus marenigrum (strain WH8102).